The primary structure comprises 330 residues: Phenylalanine--tRNA ligase alpha subunit (330 aa).

A Mg(2+)-binding site is contributed by E254.

This sequence belongs to the class-II aminoacyl-tRNA synthetase family. Phe-tRNA synthetase alpha subunit type 1 subfamily. Tetramer of two alpha and two beta subunits. It depends on Mg(2+) as a cofactor.

It localises to the cytoplasm. It carries out the reaction tRNA(Phe) + L-phenylalanine + ATP = L-phenylalanyl-tRNA(Phe) + AMP + diphosphate + H(+). The polypeptide is Phenylalanine--tRNA ligase alpha subunit (pheS) (Neisseria meningitidis serogroup A / serotype 4A (strain DSM 15465 / Z2491)).